The chain runs to 150 residues: MSGTSASSQPRTLYQLCKEFGLTLRNLQISCIWCKKHLTGAEVLAYHFKDLVVVWRKDFPYAACAFCLEFNSKICALRHYERSAFWYTVEKETGLLLEEQQIRCALCQKPLSQSEKNHHIDTGTRFQFILCQWTGRCTHCRGQCVERRLP.

Zinc fingers lie at residues Cys-31–Cys-67 and Cys-104–Cys-140.

It belongs to the papillomaviridae E6 protein family. As to quaternary structure, forms homodimers. Interacts with ubiquitin-protein ligase UBE3A/E6-AP; this interaction stimulates UBE3A ubiquitin activity. Interacts with host TP53 and EP300; this interaction inhibits TP53 activity.

Its subcellular location is the host cytoplasm. It localises to the host nucleus. Functionally, plays a major role in the induction and maintenance of cellular transformation. E6 associates with host UBE3A/E6-AP ubiquitin-protein ligase and modulates its activity. Sequesters tumor suppressor TP53 in the host cytoplasm and modulates its activity by interacting with host EP300 that results in the reduction of TP53 acetylation and activation. In turn, apoptosis induced by DNA damage is inhibited. E6 also protects host keratinocytes from apoptosis by mediating the degradation of host BAK1. May also inhibit host immune response. In Homo sapiens (Human), this protein is Protein E6.